A 179-amino-acid polypeptide reads, in one-letter code: Large ribosomal subunit protein uL5 (179 aa).

Belongs to the universal ribosomal protein uL5 family. Part of the 50S ribosomal subunit; part of the 5S rRNA/L5/L18/L25 subcomplex. Contacts the 5S rRNA and the P site tRNA. Forms a bridge to the 30S subunit in the 70S ribosome.

Its function is as follows. This is one of the proteins that bind and probably mediate the attachment of the 5S RNA into the large ribosomal subunit, where it forms part of the central protuberance. In the 70S ribosome it contacts protein S13 of the 30S subunit (bridge B1b), connecting the 2 subunits; this bridge is implicated in subunit movement. Contacts the P site tRNA; the 5S rRNA and some of its associated proteins might help stabilize positioning of ribosome-bound tRNAs. This chain is Large ribosomal subunit protein uL5, found in Staphylococcus carnosus (strain TM300).